The chain runs to 176 residues: Small ribosomal subunit protein uS5c (176 aa).

Positions 26-89 (LVERLIKISR…TDGRKNLIEL (64 aa)) constitute an S5 DRBM domain.

The protein belongs to the universal ribosomal protein uS5 family. Part of the 30S ribosomal subunit. Contacts protein S4.

Its subcellular location is the plastid. The protein localises to the chloroplast. Functionally, with S4 and S12 plays an important role in translational accuracy. The polypeptide is Small ribosomal subunit protein uS5c (rps5) (Phaeodactylum tricornutum (strain CCAP 1055/1)).